A 221-amino-acid polypeptide reads, in one-letter code: Endo-1,4-beta-xylanase A (221 aa).

Residues Met1 to Ala16 form the signal peptide. Positions Pro29–Ser221 constitute a GH11 domain. The Nucleophile role is filled by Glu114. Glu208 (proton donor) is an active-site residue.

This sequence belongs to the glycosyl hydrolase 11 (cellulase G) family.

It is found in the secreted. It catalyses the reaction Endohydrolysis of (1-&gt;4)-beta-D-xylosidic linkages in xylans.. Its pathway is glycan degradation; xylan degradation. Its function is as follows. Endo-1,4-beta-xylanase involved in the hydrolysis of xylan, a major structural heterogeneous polysaccharide found in plant biomass representing the second most abundant polysaccharide in the biosphere, after cellulose. The sequence is that of Endo-1,4-beta-xylanase A (xynA) from Aureobasidium pullulans (Black yeast).